The chain runs to 122 residues: Large ribosomal subunit protein uL14 (122 aa).

Belongs to the universal ribosomal protein uL14 family. Part of the 50S ribosomal subunit. Forms a cluster with proteins L3 and L19. In the 70S ribosome, L14 and L19 interact and together make contacts with the 16S rRNA in bridges B5 and B8.

Functionally, binds to 23S rRNA. Forms part of two intersubunit bridges in the 70S ribosome. The sequence is that of Large ribosomal subunit protein uL14 from Stenotrophomonas maltophilia (strain R551-3).